Here is a 185-residue protein sequence, read N- to C-terminus: MSVLFPINLEGALEALLFVSPEPLSLKKIAQTLELSVEEAKEIVLRLQEKLEQDQRGIMLHFSGEEVWLTTRPDFSVYIERLFKPPAQHLTQATLETLAIIAYKQPVTKTEIELIRGVKADSSIATLLEKGLIEEAGRKDAPGRPIIYRTTAKFLEFFGLKSLDELPPLNLENEAVNDGNNNFEE.

It belongs to the ScpB family. As to quaternary structure, homodimer. Homodimerization may be required to stabilize the binding of ScpA to the Smc head domains. Component of a cohesin-like complex composed of ScpA, ScpB and the Smc homodimer, in which ScpA and ScpB bind to the head domain of Smc. The presence of the three proteins is required for the association of the complex with DNA.

The protein localises to the cytoplasm. Its function is as follows. Participates in chromosomal partition during cell division. May act via the formation of a condensin-like complex containing Smc and ScpA that pull DNA away from mid-cell into both cell halves. This Carboxydothermus hydrogenoformans (strain ATCC BAA-161 / DSM 6008 / Z-2901) protein is Segregation and condensation protein B.